The chain runs to 640 residues: Threonine--tRNA ligase (640 aa).

One can recognise a TGS domain in the interval 1-63 (MSSVTVTLPD…SEDCEIEIVT (63 aa)). Positions 242–533 (DHRKLGREMD…LIEHYNGRFP (292 aa)) are catalytic. Residues C334, H385, and H510 each coordinate Zn(2+).

The protein belongs to the class-II aminoacyl-tRNA synthetase family. In terms of assembly, homodimer. It depends on Zn(2+) as a cofactor.

It is found in the cytoplasm. The enzyme catalyses tRNA(Thr) + L-threonine + ATP = L-threonyl-tRNA(Thr) + AMP + diphosphate + H(+). Functionally, catalyzes the attachment of threonine to tRNA(Thr) in a two-step reaction: L-threonine is first activated by ATP to form Thr-AMP and then transferred to the acceptor end of tRNA(Thr). The chain is Threonine--tRNA ligase from Halobacterium salinarum (strain ATCC 29341 / DSM 671 / R1).